The chain runs to 335 residues: MTKVKVAINGYGTIGKRVADAVALQDDMEIIGIAKTRPNFETVMAKDKGFNVYTLADRVGAMEKEGIEVSGTVEEMIKAADVVVDCTPGKVGATNKDLYEKAGIKAIWQGGEAHTLTGCSFNAETNYDEALGKDFVRVVSCNTTGLCRVLSPLDKEFGVKKARVTLLRRAADPGDIKTGPINAIVPNPIKLPSHHGPDVKTVIPNIDIATTAVKLPTTLMHLHTINLELEKECTAEDVESVLAEQSRVRFVGQGITSTAEIMELAKDLGRSRGDMWENCIWNESITMYEGELYFFQAIHQESDVIPENIDAIRAMMELESDASRSIEITNKTMGI.

NAD(+) contacts are provided by residues T13 to I14 and G111. D-glyceraldehyde 3-phosphate is bound at residue S140–N142. Catalysis depends on C141, which acts as the Nucleophile. Position 169 (R169) interacts with NAD(+). Position 195 to 196 (H195 to G196) interacts with D-glyceraldehyde 3-phosphate. Q300 contributes to the NAD(+) binding site.

The protein belongs to the glyceraldehyde-3-phosphate dehydrogenase family. In terms of assembly, homotetramer.

It localises to the cytoplasm. It catalyses the reaction D-glyceraldehyde 3-phosphate + phosphate + NADP(+) = (2R)-3-phospho-glyceroyl phosphate + NADPH + H(+). The enzyme catalyses D-glyceraldehyde 3-phosphate + phosphate + NAD(+) = (2R)-3-phospho-glyceroyl phosphate + NADH + H(+). It functions in the pathway carbohydrate degradation; glycolysis; pyruvate from D-glyceraldehyde 3-phosphate: step 1/5. The polypeptide is Glyceraldehyde-3-phosphate dehydrogenase (Methanococcoides burtonii (strain DSM 6242 / NBRC 107633 / OCM 468 / ACE-M)).